The chain runs to 268 residues: MQLLAFVDPVAIQIGPLSIRWYGIIIVSAIALSIWLGGRFARDRGLDPAFVDSFAIILVPAGILGARLYEVFVLQWPYYSQHPDKILQIWEGGLAIHGAVLGGAIAAAIYLPMRKQPFWRWADVVGLVLPLAQAIGRWGNFFNQEAYGDPAPDWLVRLMPGWLREGMTISGTVMHPTFLYESVWNLLTFGILLVCHRRRMKTGVVFSLYLVLYNAGRFLIESIRQDSSFIFGRIRVAQLVAAVLAILGLVLLAWFLRRPAESGDSAGV.

The next 7 helical transmembrane spans lie at 21–41, 54–74, 93–113, 122–142, 173–193, 203–223, and 236–256; these read WYGI…GRFA, FAII…VFVL, GLAI…YLPM, ADVV…GNFF, VMHP…GILL, GVVF…IESI, and VAQL…AWFL. Arginine 137 is an a 1,2-diacyl-sn-glycero-3-phospho-(1'-sn-glycerol) binding site.

It belongs to the Lgt family.

The protein resides in the cell membrane. It catalyses the reaction L-cysteinyl-[prolipoprotein] + a 1,2-diacyl-sn-glycero-3-phospho-(1'-sn-glycerol) = an S-1,2-diacyl-sn-glyceryl-L-cysteinyl-[prolipoprotein] + sn-glycerol 1-phosphate + H(+). It functions in the pathway protein modification; lipoprotein biosynthesis (diacylglyceryl transfer). Catalyzes the transfer of the diacylglyceryl group from phosphatidylglycerol to the sulfhydryl group of the N-terminal cysteine of a prolipoprotein, the first step in the formation of mature lipoproteins. In Symbiobacterium thermophilum (strain DSM 24528 / JCM 14929 / IAM 14863 / T), this protein is Phosphatidylglycerol--prolipoprotein diacylglyceryl transferase.